Consider the following 388-residue polypeptide: Chorismate synthase (388 aa).

Residues Arg39 and Arg45 each coordinate NADP(+). Residues Arg132–Ser134, Asn251–Ala252, Gly296, Lys311–Thr315, and Arg337 contribute to the FMN site.

This sequence belongs to the chorismate synthase family. Homotetramer. FMNH2 serves as cofactor.

The enzyme catalyses 5-O-(1-carboxyvinyl)-3-phosphoshikimate = chorismate + phosphate. The protein operates within metabolic intermediate biosynthesis; chorismate biosynthesis; chorismate from D-erythrose 4-phosphate and phosphoenolpyruvate: step 7/7. Its function is as follows. Catalyzes the anti-1,4-elimination of the C-3 phosphate and the C-6 proR hydrogen from 5-enolpyruvylshikimate-3-phosphate (EPSP) to yield chorismate, which is the branch point compound that serves as the starting substrate for the three terminal pathways of aromatic amino acid biosynthesis. This reaction introduces a second double bond into the aromatic ring system. The polypeptide is Chorismate synthase (Staphylococcus aureus (strain bovine RF122 / ET3-1)).